The following is a 357-amino-acid chain: 3-dehydroquinate synthase (357 aa).

Residues 104–108 (GVVGD), 128–129 (TT), Lys-141, and 168–171 (FLET) contribute to the NAD(+) site. Zn(2+)-binding residues include Glu-183, His-243, and His-260.

Belongs to the sugar phosphate cyclases superfamily. Dehydroquinate synthase family. It depends on Co(2+) as a cofactor. Requires Zn(2+) as cofactor. NAD(+) is required as a cofactor.

It localises to the cytoplasm. The catalysed reaction is 7-phospho-2-dehydro-3-deoxy-D-arabino-heptonate = 3-dehydroquinate + phosphate. Its pathway is metabolic intermediate biosynthesis; chorismate biosynthesis; chorismate from D-erythrose 4-phosphate and phosphoenolpyruvate: step 2/7. In terms of biological role, catalyzes the conversion of 3-deoxy-D-arabino-heptulosonate 7-phosphate (DAHP) to dehydroquinate (DHQ). This Streptococcus pyogenes serotype M49 (strain NZ131) protein is 3-dehydroquinate synthase.